The following is a 156-amino-acid chain: Ribosomal RNA large subunit methyltransferase H (156 aa).

S-adenosyl-L-methionine-binding positions include Leu-73, Gly-104, and Leu-123–Leu-128.

It belongs to the RNA methyltransferase RlmH family. Homodimer.

It is found in the cytoplasm. It catalyses the reaction pseudouridine(1915) in 23S rRNA + S-adenosyl-L-methionine = N(3)-methylpseudouridine(1915) in 23S rRNA + S-adenosyl-L-homocysteine + H(+). Functionally, specifically methylates the pseudouridine at position 1915 (m3Psi1915) in 23S rRNA. This chain is Ribosomal RNA large subunit methyltransferase H, found in Shewanella frigidimarina (strain NCIMB 400).